The sequence spans 244 residues: MIRTDAKDGALVLFSGGQDSATCVAWALERYQTVETLGFDYGQRHRVELECREGVRDALKRRFPQWSHKLGDDHLIDLSVLGSISDTAMTRAIEIETASNGLPNTFVPGRNLLFMTIAAAIAYRRGLRALVGGMCETDFSGYPDCRDDTMKALQVALNLGMDTRFVLETPLMWLDKADTWRLAEQLGGAPLVELIRVETHTCYVGERSELHDWGFGCGECPACKLRKRGYDAYLRGESVTEAPA.

Position 14-24 (14-24 (FSGGQDSATCV)) interacts with ATP. Zn(2+)-binding residues include Cys202, Cys217, Cys220, and Cys223.

It belongs to the QueC family. Zn(2+) serves as cofactor.

The enzyme catalyses 7-carboxy-7-deazaguanine + NH4(+) + ATP = 7-cyano-7-deazaguanine + ADP + phosphate + H2O + H(+). Its pathway is purine metabolism; 7-cyano-7-deazaguanine biosynthesis. In terms of biological role, catalyzes the ATP-dependent conversion of 7-carboxy-7-deazaguanine (CDG) to 7-cyano-7-deazaguanine (preQ(0)). This Burkholderia mallei (strain NCTC 10229) protein is 7-cyano-7-deazaguanine synthase.